The sequence spans 429 residues: Histidine--tRNA ligase (429 aa).

It belongs to the class-II aminoacyl-tRNA synthetase family. In terms of assembly, homodimer.

The protein resides in the cytoplasm. The enzyme catalyses tRNA(His) + L-histidine + ATP = L-histidyl-tRNA(His) + AMP + diphosphate + H(+). In Streptococcus pneumoniae serotype 19F (strain G54), this protein is Histidine--tRNA ligase.